Reading from the N-terminus, the 199-residue chain is Recombination protein RecR (199 aa).

The segment at 56–71 (CTVCFNVTEQETCNIC) adopts a C4-type zinc-finger fold. Residues 79 to 174 (SVICVVEESK…TVTRLASGLP (96 aa)) enclose the Toprim domain.

This sequence belongs to the RecR family.

In terms of biological role, may play a role in DNA repair. It seems to be involved in an RecBC-independent recombinational process of DNA repair. It may act with RecF and RecO. In Paenarthrobacter aurescens (strain TC1), this protein is Recombination protein RecR.